A 150-amino-acid polypeptide reads, in one-letter code: MNTLKMQRRIAAEILKCGENRIWIDPERIDDVASAITREDIKRLIKEGVIKKKPIKGQSRYRAKIRHEQKKKGRHRGPGSRKGKKTARMGKKELWIKTIRALRKELRKLKAQKKIDRKTYRMLYIRAKGGQFKNKHQLYLFLEEHGLLKK.

The interval 55–89 (IKGQSRYRAKIRHEQKKKGRHRGPGSRKGKKTARM) is disordered.

The protein belongs to the eukaryotic ribosomal protein eL19 family. In terms of assembly, part of the 50S ribosomal subunit.

In terms of biological role, binds to the 23S rRNA. The protein is Large ribosomal subunit protein eL19 of Pyrococcus furiosus (strain ATCC 43587 / DSM 3638 / JCM 8422 / Vc1).